We begin with the raw amino-acid sequence, 85 residues long: MIVGVAYAKPTVQVWKHVDVPEGTSAREAIERSGLLAQFPEIDLAVNKVGIFGAICPLDRTLAEGDRVEIYRPIHPEAELLEKKR.

This sequence belongs to the UPF0125 (RnfH) family.

The polypeptide is Protein RnfH (Cereibacter sphaeroides (strain ATCC 17023 / DSM 158 / JCM 6121 / CCUG 31486 / LMG 2827 / NBRC 12203 / NCIMB 8253 / ATH 2.4.1.) (Rhodobacter sphaeroides)).